The sequence spans 662 residues: Probable protein phosphatase 2C 4 (662 aa).

At Ser153 the chain carries Phosphoserine. The region spanning 249–653 (DVSLENQNLQ…DDVSIVVISL (405 aa)) is the PPM-type phosphatase domain. Mn(2+)-binding residues include Asp286, Gly287, Asp581, and Asp644.

Belongs to the PP2C family. Mg(2+) is required as a cofactor. It depends on Mn(2+) as a cofactor. As to expression, expressed in seedlings, roots, leaves, stems, young inflorescences, flowers and siliques.

It is found in the nucleus. The catalysed reaction is O-phospho-L-seryl-[protein] + H2O = L-seryl-[protein] + phosphate. It carries out the reaction O-phospho-L-threonyl-[protein] + H2O = L-threonyl-[protein] + phosphate. Its function is as follows. Involved in leaf development regulation. The sequence is that of Probable protein phosphatase 2C 4 (PLL5) from Arabidopsis thaliana (Mouse-ear cress).